Here is a 257-residue protein sequence, read N- to C-terminus: Dihydroorotate dehydrogenase B (NAD(+)), electron transfer subunit (257 aa).

In terms of domain architecture, FAD-binding FR-type spans 2–102; that stretch reads IGRERMTVAS…LGPLGNGFPL (101 aa). Residues 53–56, 70–72, and 77–78 contribute to the FAD site; these read RPLS, IYR, and GT. The [2Fe-2S] cluster site is built by Cys-221, Cys-226, Cys-229, and Cys-244.

This sequence belongs to the PyrK family. In terms of assembly, heterotetramer of 2 PyrK and 2 PyrD type B subunits. Requires [2Fe-2S] cluster as cofactor. FAD serves as cofactor.

It functions in the pathway pyrimidine metabolism; UMP biosynthesis via de novo pathway; orotate from (S)-dihydroorotate (NAD(+) route): step 1/1. In terms of biological role, responsible for channeling the electrons from the oxidation of dihydroorotate from the FMN redox center in the PyrD type B subunit to the ultimate electron acceptor NAD(+). In Geobacillus kaustophilus (strain HTA426), this protein is Dihydroorotate dehydrogenase B (NAD(+)), electron transfer subunit.